The sequence spans 161 residues: Pro-corazonin (161 aa).

The N-terminal stretch at 1–20 (MMRLLLLPLFLFTLSMACMG) is a signal peptide. At Q21 the chain carries Pyrrolidone carboxylic acid. N31 is modified (asparagine amide). Residues 70–161 (LERCLAQLQR…SGEPSVFGKH (92 aa)) constitute a propeptide that is removed on maturation. 2 disordered regions span residues 93–125 (NANRPEPDSSDSGSSRNRANNNNENVLYPTPIQ) and 142–161 (VAGSGPTGAGSGEPSVFGKH). A compositionally biased stretch (low complexity) spans 102–117 (SDSGSSRNRANNNNEN).

It belongs to the corazonin family.

It is found in the secreted. In terms of biological role, cardioactive peptide. Corazonin is probably involved in the physiological regulation of the heart beat. Clock (Clk) and cycle (cyc) proteins negatively regulate Crz transcription in a cell-specific manner. The polypeptide is Pro-corazonin (Drosophila pseudoobscura pseudoobscura (Fruit fly)).